Consider the following 763-residue polypeptide: Protein translocase subunit SecA 2 (763 aa).

Residues Gln-83, 101–105 (GEGKT), and Asp-490 each bind ATP.

The protein belongs to the SecA family. Monomer and homodimer. Part of the essential Sec protein translocation apparatus which comprises SecA, SecYEG and auxiliary proteins SecDF. Other proteins may also be involved.

It localises to the cell membrane. Its subcellular location is the cytoplasm. The enzyme catalyses ATP + H2O + cellular proteinSide 1 = ADP + phosphate + cellular proteinSide 2.. Part of the Sec protein translocase complex. Interacts with the SecYEG preprotein conducting channel. Has a central role in coupling the hydrolysis of ATP to the transfer of proteins into and across the cell membrane, serving as an ATP-driven molecular motor driving the stepwise translocation of polypeptide chains across the membrane. In Corynebacterium glutamicum (strain ATCC 13032 / DSM 20300 / JCM 1318 / BCRC 11384 / CCUG 27702 / LMG 3730 / NBRC 12168 / NCIMB 10025 / NRRL B-2784 / 534), this protein is Protein translocase subunit SecA 2.